The chain runs to 291 residues: Elongation factor Ts (291 aa).

The involved in Mg(2+) ion dislocation from EF-Tu stretch occupies residues 79–82 (TDFV).

It belongs to the EF-Ts family.

It localises to the cytoplasm. In terms of biological role, associates with the EF-Tu.GDP complex and induces the exchange of GDP to GTP. It remains bound to the aminoacyl-tRNA.EF-Tu.GTP complex up to the GTP hydrolysis stage on the ribosome. This chain is Elongation factor Ts, found in Jannaschia sp. (strain CCS1).